A 148-amino-acid chain; its full sequence is Lipoprotein MlpA (148 aa).

The first 17 residues, 1–17 (MKIINILFCLFLLLLNS), serve as a signal peptide directing secretion. Cys18 is lipidated: N-palmitoyl cysteine. Cys18 carries the S-diacylglycerol cysteine lipid modification. The segment at 26 to 58 (LKNNAQQTKSRGKRDLTQKEATPEKPKSKEELL) is disordered. Positions 38 to 58 (KRDLTQKEATPEKPKSKEELL) are enriched in basic and acidic residues.

The protein belongs to the Multicopy lipoprotein (Mlp) family.

The protein localises to the cell outer membrane. Its function is as follows. An outer membrane protein that may participate in pathogenesis. Some human Lyme disease patients have antibodies against this protein. The Mlp proteins probably undergo intragenic recombination, generating new alleles. The chain is Lipoprotein MlpA (mlpA) from Borreliella burgdorferi (strain ATCC 35210 / DSM 4680 / CIP 102532 / B31) (Borrelia burgdorferi).